The sequence spans 135 residues: S-protein homolog 29 (135 aa).

The signal sequence occupies residues 1–24 (MKNSSKIFVVLSIILFYVISSCHG). An N-linked (GlcNAc...) asparagine glycan is attached at Asn-110.

The protein belongs to the plant self-incompatibility (S1) protein family.

The protein resides in the secreted. This is S-protein homolog 29 from Arabidopsis thaliana (Mouse-ear cress).